The following is a 126-amino-acid chain: Gas vesicle protein J (126 aa).

This sequence belongs to the gas vesicle GvpA family. Interacts with GvpA.

It localises to the gas vesicle. A minor component of the gas vesicle, might be involved in nucleating gas vesicle formation. Gas vesicles (GV) are hollow, gas filled proteinaceous nanostructures. During planktonic growth they allow positioning of the organism at a favorable depth for light or nutrient acquisition. The sequence is that of Gas vesicle protein J from Pseudanabaena galeata (strain PCC 6901).